A 149-amino-acid polypeptide reads, in one-letter code: VapC ribonuclease PF0355 (149 aa).

Residues 8 to 122 (TFDSLALIKM…ITDDSKRYEP (115 aa)) enclose the PINc domain. Residues aspartate 10 and aspartate 98 each coordinate Mg(2+).

The protein belongs to the PINc/VapC protein family. It depends on Mg(2+) as a cofactor.

Its function is as follows. Toxic component of a type II toxin-antitoxin (TA) system. An RNase. The polypeptide is VapC ribonuclease PF0355 (Pyrococcus furiosus (strain ATCC 43587 / DSM 3638 / JCM 8422 / Vc1)).